The following is a 197-amino-acid chain: HTH-type transcriptional regulator BetI (197 aa).

An HTH tetR-type domain is found at 8 to 68; the sequence is PIRRQQLIQA…ATMRHLMNAL (61 aa). The H-T-H motif DNA-binding region spans 31 to 50; sequence SIALIARLAGVSNGIISHYF.

It participates in amine and polyamine biosynthesis; betaine biosynthesis via choline pathway [regulation]. In terms of biological role, repressor involved in the biosynthesis of the osmoprotectant glycine betaine. It represses transcription of the choline transporter BetT and the genes of BetAB involved in the synthesis of glycine betaine. The polypeptide is HTH-type transcriptional regulator BetI (Pseudomonas savastanoi pv. phaseolicola (strain 1448A / Race 6) (Pseudomonas syringae pv. phaseolicola (strain 1448A / Race 6))).